A 209-amino-acid polypeptide reads, in one-letter code: NAD(P)H-quinone oxidoreductase subunit I (209 aa).

4Fe-4S ferredoxin-type domains lie at 55 to 84 (GRIH…VDWE) and 95 to 124 (KHYS…MTEE). 8 residues coordinate [4Fe-4S] cluster: cysteine 64, cysteine 67, cysteine 70, cysteine 74, cysteine 104, cysteine 107, cysteine 110, and cysteine 114.

It belongs to the complex I 23 kDa subunit family. In terms of assembly, NDH-1 is composed of at least 11 different subunits. [4Fe-4S] cluster serves as cofactor.

Its subcellular location is the cellular thylakoid membrane. It carries out the reaction a plastoquinone + NADH + (n+1) H(+)(in) = a plastoquinol + NAD(+) + n H(+)(out). The catalysed reaction is a plastoquinone + NADPH + (n+1) H(+)(in) = a plastoquinol + NADP(+) + n H(+)(out). NDH-1 shuttles electrons from an unknown electron donor, via FMN and iron-sulfur (Fe-S) centers, to quinones in the respiratory and/or the photosynthetic chain. The immediate electron acceptor for the enzyme in this species is believed to be plastoquinone. Couples the redox reaction to proton translocation, and thus conserves the redox energy in a proton gradient. This chain is NAD(P)H-quinone oxidoreductase subunit I, found in Trichodesmium erythraeum (strain IMS101).